A 145-amino-acid chain; its full sequence is Aminoglycoside N(6')-acetyltransferase type 1 (145 aa).

In terms of domain architecture, N-acetyltransferase spans 1–145; that stretch reads MNIKPASEAS…KVVYFSKKID (145 aa). 3 residues coordinate substrate: tryptophan 22, tyrosine 65, and glutamate 78. 80–82 provides a ligand contact to acetyl-CoA; the sequence is IYV. Aspartate 114 lines the substrate pocket. Acetyl-CoA is bound at residue asparagine 119. Glutamate 135 provides a ligand contact to substrate.

Homodimer.

It carries out the reaction kanamycin B + acetyl-CoA = N(6')-acetylkanamycin B + CoA + H(+). In terms of biological role, catalyzes the transfer of an acetyl group from acetyl-CoA to the 6'-amino group of aminoglycoside molecules conferring resistance to antibiotics containing the purpurosamine ring including amikacin, kanamycin, tobramycin and netilmicin. The polypeptide is Aminoglycoside N(6')-acetyltransferase type 1 (Acinetobacter haemolyticus).